An 877-amino-acid polypeptide reads, in one-letter code: MKTSEIRKKFLDFFASKGHQVVPSSSLIPGNDPTLMFTVAGMVQFKDVFLGFEKRDYTRATTSQKCLRAGGKHNDLENVGYTARHHTFFEMLGNFSFGDYFKRDAITFAWEFLTGEQWLALPKDKLMVTVYATDDEAYDIWHQTVGLPADKIVRIGDNKGAPYASDNFWTMGDTGPCGPCTEIFFDHGPSVAGGPPGSPDEDGDRFMEIWNNVFMQFNRDEAGTLHPLPKPSVDTGMGLERLSTVLQHVKSNYETDALACLVRAAARETGVEYSQDVPSLKVIADHIRACSFMVADGILPSNEGRGYVLRRIARRAIRHGYKLGQKGLFFHKIVADLVAEMGEAYPELREKQAHIEDALRAEEIKFAETLEIGMGLVDSALEGGKTALDGDTIFKLYDTFGFPVDLTADICRERGIHADLEGFERAMEAQRERGRAGSNFKMSGKIAYDGEDTRFHGYDKSSVEAKVLALYKGTDPVDSLSAGDEGIVVLDGTAFYAEGGGQVGDVGEISAAGGIAALFDVADTQKIQGAAFGHKGKLARGALKVGDAVTATIDLHQRQASARNHSATHLLHAALRHVLGGHVVQKGSLVNPERTRFDFAHGEAVTAAQIAELERVVNHVIAANYEVKAELMSMEAAQKSGAMMLFGEKYGDEVRVLTMGDFSAELCGGTHVKRTGDIGLFKIVAEGGVAAGVRRIEAVTGEGALAYIQAQDALIKEAAAALKAQTSDEVLAKIAALQDSAKALEKELAKLKGQLASSAGDSLADAAADINGVKVLAAELPGADNTALRETLDKLKDKLGSAAIVLAAKGDGKVALVAGVTADLTGKLKAGELVNFVAQQVGGKGGGRPDMAQAGGTQPENLDAALNGVQAWVAGKL.

Zn(2+)-binding residues include His565, His569, Cys667, and His671.

It belongs to the class-II aminoacyl-tRNA synthetase family. It depends on Zn(2+) as a cofactor.

It is found in the cytoplasm. It carries out the reaction tRNA(Ala) + L-alanine + ATP = L-alanyl-tRNA(Ala) + AMP + diphosphate. Its function is as follows. Catalyzes the attachment of alanine to tRNA(Ala) in a two-step reaction: alanine is first activated by ATP to form Ala-AMP and then transferred to the acceptor end of tRNA(Ala). Also edits incorrectly charged Ser-tRNA(Ala) and Gly-tRNA(Ala) via its editing domain. The sequence is that of Alanine--tRNA ligase from Chromobacterium violaceum (strain ATCC 12472 / DSM 30191 / JCM 1249 / CCUG 213 / NBRC 12614 / NCIMB 9131 / NCTC 9757 / MK).